The primary structure comprises 553 residues: T-complex protein 1 subunit eta (553 aa).

Position 41 (G41) interacts with ADP. G41 contributes to the ATP binding site. Residue D92 participates in Mg(2+) binding. ADP-binding residues include G93, T94, T95, S96, S164, and S165. G93 is an ATP binding site. S96 serves as a coordination point for ATP. Positions 398 and 409 each coordinate ATP. Residues G409, E494, and R499 each coordinate ADP. Residue R499 coordinates ATP. Residues 523–553 form a disordered region; that stretch reads PRSTVDAPPGGRGRGRGQTPQPLRPRSVALS. Positions 539 to 553 are enriched in low complexity; sequence GQTPQPLRPRSVALS.

Component of the chaperonin-containing T-complex (TRiC), a hexadecamer composed of two identical back-to-back stacked rings enclosing a protein folding chamber. Each ring is made up of eight different subunits: TCP1/CCT1, CCT2, CCT3, CCT4, CCT5, CCT6A/CCT6, CCT7, CCT8.

The protein localises to the cytoplasm. The enzyme catalyses ATP + H2O = ADP + phosphate + H(+). In terms of biological role, component of the chaperonin-containing T-complex (TRiC), a molecular chaperone complex that assists the folding of actin, tubulin and other proteins upon ATP hydrolysis. This Gallus gallus (Chicken) protein is T-complex protein 1 subunit eta.